The sequence spans 317 residues: Aspartate carbamoyltransferase catalytic subunit (317 aa).

Carbamoyl phosphate contacts are provided by Arg66 and Thr67. Lys94 contributes to the L-aspartate binding site. Residues Arg116, His144, and Gln147 each coordinate carbamoyl phosphate. Residues Arg177 and Arg231 each contribute to the L-aspartate site. Positions 272 and 273 each coordinate carbamoyl phosphate.

The protein belongs to the aspartate/ornithine carbamoyltransferase superfamily. ATCase family. In terms of assembly, heterododecamer (2C3:3R2) of six catalytic PyrB chains organized as two trimers (C3), and six regulatory PyrI chains organized as three dimers (R2).

The catalysed reaction is carbamoyl phosphate + L-aspartate = N-carbamoyl-L-aspartate + phosphate + H(+). The protein operates within pyrimidine metabolism; UMP biosynthesis via de novo pathway; (S)-dihydroorotate from bicarbonate: step 2/3. Functionally, catalyzes the condensation of carbamoyl phosphate and aspartate to form carbamoyl aspartate and inorganic phosphate, the committed step in the de novo pyrimidine nucleotide biosynthesis pathway. This is Aspartate carbamoyltransferase catalytic subunit from Rhodopseudomonas palustris (strain ATCC BAA-98 / CGA009).